The chain runs to 328 residues: NADH-quinone oxidoreductase subunit H (328 aa).

Transmembrane regions (helical) follow at residues 10–30 (IIKIVVIVLIFSALAGIGTYF), 80–100 (IAPVITAATAFMAAAAIPFLP), 118–138 (IGILYILGIMGVGLYGPLLGG), 155–175 (AVFISYEVVTGLSILAPIMMV), 191–211 (ITSWIVWTQPVAFILFWIAAF), 243–263 (LFFIGEYANMFFISFVISLLF), 272–292 (LLGALGLLAKVAFFFFFFLWT), and 306–326 (WLCWKVLMPIALINIVITAIV).

The protein belongs to the complex I subunit 1 family. In terms of assembly, NDH-1 is composed of 14 different subunits. Subunits NuoA, H, J, K, L, M, N constitute the membrane sector of the complex.

Its subcellular location is the cell inner membrane. The catalysed reaction is a quinone + NADH + 5 H(+)(in) = a quinol + NAD(+) + 4 H(+)(out). Functionally, NDH-1 shuttles electrons from NADH, via FMN and iron-sulfur (Fe-S) centers, to quinones in the respiratory chain. The immediate electron acceptor for the enzyme in this species is believed to be ubiquinone. Couples the redox reaction to proton translocation (for every two electrons transferred, four hydrogen ions are translocated across the cytoplasmic membrane), and thus conserves the redox energy in a proton gradient. This subunit may bind ubiquinone. The polypeptide is NADH-quinone oxidoreductase subunit H (Sulfurimonas denitrificans (strain ATCC 33889 / DSM 1251) (Thiomicrospira denitrificans (strain ATCC 33889 / DSM 1251))).